The primary structure comprises 445 residues: Polyadenylate-binding protein RBP47A (445 aa).

The segment covering 1–12 has biased composition (polar residues); the sequence is MQTPNNNGSTDS. 2 disordered regions span residues 1-45 and 93-117; these read MQTP…WQQQ and AAYQ…GGDD. Over residues 22–35 the composition is skewed to pro residues; it reads TPPPPLQQSTPPPQ. Composition is skewed to low complexity over residues 36–45 and 93–108; these read QQQQQQWQQQ and AAYQ…SQQQ. RRM domains follow at residues 119–199, 213–292, and 327–399; these read KTLW…WASF, LSIF…IATP, and STIF…WGRS.

Belongs to the polyadenylate-binding RBP47 family. As to quaternary structure, interacts with the poly(A) tail of mRNA in nucleus. As to expression, expressed in leaves, stems, flowers, and seedlings.

It localises to the nucleus. The protein resides in the cytoplasmic granule. In terms of biological role, heterogeneous nuclear ribonucleoprotein (hnRNP)-protein binding the poly(A) tail of mRNA and probably involved in some steps of pre-mRNA maturation. The polypeptide is Polyadenylate-binding protein RBP47A (RBP47A) (Arabidopsis thaliana (Mouse-ear cress)).